The following is a 508-amino-acid chain: Light-independent protochlorophyllide reductase subunit B (508 aa).

Aspartate 36 is a binding site for [4Fe-4S] cluster. Aspartate 294 acts as the Proton donor in catalysis. 429–430 (GM) contributes to the substrate binding site.

Belongs to the ChlB/BchB/BchZ family. In terms of assembly, protochlorophyllide reductase is composed of three subunits; ChlL, ChlN and ChlB. Forms a heterotetramer of two ChlB and two ChlN subunits. [4Fe-4S] cluster serves as cofactor.

It catalyses the reaction chlorophyllide a + oxidized 2[4Fe-4S]-[ferredoxin] + 2 ADP + 2 phosphate = protochlorophyllide a + reduced 2[4Fe-4S]-[ferredoxin] + 2 ATP + 2 H2O. It functions in the pathway porphyrin-containing compound metabolism; chlorophyll biosynthesis (light-independent). Its function is as follows. Component of the dark-operative protochlorophyllide reductase (DPOR) that uses Mg-ATP and reduced ferredoxin to reduce ring D of protochlorophyllide (Pchlide) to form chlorophyllide a (Chlide). This reaction is light-independent. The NB-protein (ChlN-ChlB) is the catalytic component of the complex. This Nostoc sp. (strain PCC 7120 / SAG 25.82 / UTEX 2576) protein is Light-independent protochlorophyllide reductase subunit B.